The chain runs to 258 residues: Acyl-[acyl-carrier-protein]--UDP-N-acetylglucosamine O-acyltransferase (258 aa).

This sequence belongs to the transferase hexapeptide repeat family. LpxA subfamily. Homotrimer.

Its subcellular location is the cytoplasm. The enzyme catalyses a (3R)-hydroxyacyl-[ACP] + UDP-N-acetyl-alpha-D-glucosamine = a UDP-3-O-[(3R)-3-hydroxyacyl]-N-acetyl-alpha-D-glucosamine + holo-[ACP]. Its pathway is glycolipid biosynthesis; lipid IV(A) biosynthesis; lipid IV(A) from (3R)-3-hydroxytetradecanoyl-[acyl-carrier-protein] and UDP-N-acetyl-alpha-D-glucosamine: step 1/6. Its function is as follows. Involved in the biosynthesis of lipid A, a phosphorylated glycolipid that anchors the lipopolysaccharide to the outer membrane of the cell. In Stutzerimonas stutzeri (strain A1501) (Pseudomonas stutzeri), this protein is Acyl-[acyl-carrier-protein]--UDP-N-acetylglucosamine O-acyltransferase.